Consider the following 75-residue polypeptide: uncharacterized protein (75 aa).

Residues Leu-12–Val-32 traverse the membrane as a helical segment.

It localises to the cell membrane. This is an uncharacterized protein from Bacillus subtilis (strain 168).